The primary structure comprises 140 residues: Translation initiation factor 2 subunit beta (140 aa).

This sequence belongs to the eIF-2-beta/eIF-5 family. In terms of assembly, heterotrimer composed of an alpha, a beta and a gamma chain.

In terms of biological role, eIF-2 functions in the early steps of protein synthesis by forming a ternary complex with GTP and initiator tRNA. In Pyrococcus furiosus (strain ATCC 43587 / DSM 3638 / JCM 8422 / Vc1), this protein is Translation initiation factor 2 subunit beta.